A 476-amino-acid polypeptide reads, in one-letter code: MEFSAETLRQQLGKYKFRDLTIEELKDLNRTFPSFIFSMETYTFRDGSQKDLLNLTGTVPMKHQGTTYNIPICLWILDSHPFAPPLCFLKPSGNMGIRVGRHIDAQGRIYLPYLQNWSHPKSTVTGLIREMAVKFEEELPLYSLSAEDGARQRELLSYIAQVTDGVSSMDVKAPSRAKVTVIGGGDMALACLLAVSAKGTAGKLLLLDPTDGEAAGGAAADLEIFSLPNVQVTKDFSAIAGSAIVIVTVNSWSNSQSYVGVLQSNVELLRGILPAVAHHCPKCLLLVASQPVEIMTYATWKLSGFPHNRVLGIGCNLDSGRFRHVIEKLADSEEGAQGAWIIGEQSDNKVAVWGAPDSSANRQTPCKLYPKIFQEQLTSRALEILKGKGQRSWSVGLSVADITDTLVQNKGKVHSVSALCKGQFGVQEEVFLSIPCVLGSAGVTGAVQTLQDEAQIWETLQRSAAAIESVQQQLRL.

In terms of domain architecture, UEV spans E2–S145. G185–E213 lines the NAD(+) pocket.

The protein in the N-terminal section; belongs to the ubiquitin-conjugating enzyme family. UEV subfamily. It in the C-terminal section; belongs to the LDH/MDH superfamily. As to quaternary structure, homodimer.

Functionally, possible negative regulator of polyubiquitination. This Xenopus tropicalis (Western clawed frog) protein is Ubiquitin-conjugating enzyme E2 variant 3 (uevld).